Here is a 430-residue protein sequence, read N- to C-terminus: Enolase (430 aa).

Glutamine 163 serves as a coordination point for (2R)-2-phosphoglycerate. Catalysis depends on glutamate 205, which acts as the Proton donor. Residues aspartate 242, glutamate 285, and aspartate 312 each contribute to the Mg(2+) site. Positions 337, 366, 367, and 388 each coordinate (2R)-2-phosphoglycerate. Lysine 337 (proton acceptor) is an active-site residue.

This sequence belongs to the enolase family. Mg(2+) is required as a cofactor.

It localises to the cytoplasm. It is found in the secreted. Its subcellular location is the cell surface. It catalyses the reaction (2R)-2-phosphoglycerate = phosphoenolpyruvate + H2O. Its pathway is carbohydrate degradation; glycolysis; pyruvate from D-glyceraldehyde 3-phosphate: step 4/5. Functionally, catalyzes the reversible conversion of 2-phosphoglycerate (2-PG) into phosphoenolpyruvate (PEP). It is essential for the degradation of carbohydrates via glycolysis. The chain is Enolase from Rhodopseudomonas palustris (strain BisB18).